Reading from the N-terminus, the 184-residue chain is Tumor necrosis factor alpha-induced protein 8-like protein 2 (184 aa).

Ser3 bears the Phosphoserine; by MAP3K7 mark.

It belongs to the TNFAIP8 family. TNFAIP8L2 subfamily. In terms of assembly, may interact with CASP8; however, such result is unclear since PubMed:19079267 could not reproduce the interaction with CASP8. Interacts with RAC1. Phosphorylated by TAK1/MAP3K7; this phosphorylation triggers association with BTRC and subsequent ubiquitination and degradation. Post-translationally, ubiquitinated in a BTRC-depdent manner; leading to degradation mediated through the proteasome pathway. In terms of tissue distribution, expressed in T-cells, B-cells, macrophages, neurons in the brain and brainstem, and stratified squamous epithelia of the esophagus, cervix and skin.

It localises to the cytoplasm. The protein resides in the nucleus. The protein localises to the lysosome. Functionally, acts as a negative regulator of innate and adaptive immunity by maintaining immune homeostasis. Plays a regulatory role in the Toll-like signaling pathway by determining the strength of LPS-induced signaling and gene expression. Inhibits TCR-mediated T-cell activation and negatively regulate T-cell function to prevent hyperresponsiveness. Also inhibits autolysosome formation via negatively modulating MTOR activation by interacting with RAC1 and promoting the disassociation of the RAC1-MTOR complex. Plays an essential role in NK-cell biology by acting as a checkpoint and displaying an expression pattern correlating with NK-cell maturation process and by negatively regulating NK-cell maturation and antitumor immunity. Mechanistically, suppresses IL-15-triggered mTOR activity in NK-cells. This Homo sapiens (Human) protein is Tumor necrosis factor alpha-induced protein 8-like protein 2 (TNFAIP8L2).